A 587-amino-acid chain; its full sequence is MTEQTFILGKDAALEDSIAKFQQKLTALGFNIEEASWLNPVPNVWSVHIRDKDCPQCFSNGKGASKKAALASALGEYFERLSTNYFFADFYLGQEIANSDFVHYPNEKWFPIEDDALLPNGILDDYLLDYFBPNAELTPELLVDLQSGNYDRGIVAMPYVRQSDEQTVYIPQSIIANLYVSNGMSAGNTKFEARVQGLSEVFERYVKNKIIAEAISLPEIPKSVMDRYPSIQASIAKLEEEGFPIYAFDASLGGKYPVICVVLLNPNNGTCFSSFGAHPNFQVALERTVTELLQGRSLKDLDVFSPPSFNNDDVAEHANLETHFIDSSGLISWDLLKETPDYEFADWDFSGTTQEEYNNLMAIFRADEKEVYVMDYNHLDVYACRIIVPGMSDIYPADDLIYANNNMGMDWREILLDLPNWHHDAETYQELLEELDGQDIDDATRVREFIGIVAPKNSGWTTLRVGELKSMLHLALGELEQALDWANWTLNMNSSVFTTEPVNYYRTLISIIELHLDQNRDPAQYRAVFEKMYGKDAVKQAWAAVSEGGNPFYNLPASDENLKNFKEHQALLGAYGKLQKAKKENWK.

The 366-residue stretch at 61-426 folds into the YcaO domain; sequence GKGASKKAAL…DLPNWHHDAE (366 aa).

This is an uncharacterized protein from Haemophilus influenzae (strain ATCC 51907 / DSM 11121 / KW20 / Rd).